The sequence spans 234 residues: Segregation and condensation protein A (234 aa).

It belongs to the ScpA family. In terms of assembly, component of a cohesin-like complex composed of ScpA, ScpB and the Smc homodimer, in which ScpA and ScpB bind to the head domain of Smc. The presence of the three proteins is required for the association of the complex with DNA.

The protein resides in the cytoplasm. Its function is as follows. Participates in chromosomal partition during cell division. May act via the formation of a condensin-like complex containing Smc and ScpB that pull DNA away from mid-cell into both cell halves. This chain is Segregation and condensation protein A, found in Streptococcus pyogenes serotype M18 (strain MGAS8232).